The chain runs to 475 residues: Ribulose bisphosphate carboxylase large chain (475 aa).

Positions 1–2 are excised as a propeptide; that stretch reads MS. Position 3 is an N-acetylproline (proline 3). An N6,N6,N6-trimethyllysine modification is found at lysine 14. Positions 123 and 173 each coordinate substrate. The active-site Proton acceptor is the lysine 175. Lysine 177 contacts substrate. Residues lysine 201, aspartate 203, and glutamate 204 each coordinate Mg(2+). Lysine 201 is modified (N6-carboxylysine). Histidine 294 functions as the Proton acceptor in the catalytic mechanism. Residues arginine 295, histidine 327, and serine 379 each contribute to the substrate site.

The protein belongs to the RuBisCO large chain family. Type I subfamily. In terms of assembly, heterohexadecamer of 8 large chains and 8 small chains; disulfide-linked. The disulfide link is formed within the large subunit homodimers. Mg(2+) is required as a cofactor. Post-translationally, the disulfide bond which can form in the large chain dimeric partners within the hexadecamer appears to be associated with oxidative stress and protein turnover.

The protein localises to the plastid. Its subcellular location is the chloroplast. It carries out the reaction 2 (2R)-3-phosphoglycerate + 2 H(+) = D-ribulose 1,5-bisphosphate + CO2 + H2O. It catalyses the reaction D-ribulose 1,5-bisphosphate + O2 = 2-phosphoglycolate + (2R)-3-phosphoglycerate + 2 H(+). Its function is as follows. RuBisCO catalyzes two reactions: the carboxylation of D-ribulose 1,5-bisphosphate, the primary event in carbon dioxide fixation, as well as the oxidative fragmentation of the pentose substrate in the photorespiration process. Both reactions occur simultaneously and in competition at the same active site. This Eucalyptus globulus subsp. globulus (Tasmanian blue gum) protein is Ribulose bisphosphate carboxylase large chain.